The following is a 231-amino-acid chain: Cytidylate kinase (231 aa).

Residue 18–26 (GPSGTGKSS) participates in ATP binding.

Belongs to the cytidylate kinase family. Type 1 subfamily.

It is found in the cytoplasm. It catalyses the reaction CMP + ATP = CDP + ADP. It carries out the reaction dCMP + ATP = dCDP + ADP. The protein is Cytidylate kinase of Streptomyces coelicolor (strain ATCC BAA-471 / A3(2) / M145).